The chain runs to 155 residues: Transcription antitermination protein NusB (155 aa).

The protein belongs to the NusB family.

In terms of biological role, involved in transcription antitermination. Required for transcription of ribosomal RNA (rRNA) genes. Binds specifically to the boxA antiterminator sequence of the ribosomal RNA (rrn) operons. This Ralstonia pickettii (strain 12J) protein is Transcription antitermination protein NusB.